Reading from the N-terminus, the 774-residue chain is Two pore channel protein 2 (774 aa).

Topologically, residues 1–92 (MEEEPLLAGS…GSLRLYRWYY (92 aa)) are cytoplasmic. The chain crosses the membrane as a helical span at residues 93–113 (SNLCQWGLGLTIAVVLALAFI). The Extracellular segment spans residues 114 to 140 (ERPSSLTYTSDIRVKPKPWEPPCGMTE). A helical transmembrane segment spans residues 141 to 161 (GIEIVCLCIFILDVTAKGYLI). Residues 162 to 170 (GWEEFRMNK) lie on the Cytoplasmic side of the membrane. The helical transmembrane segment at 171–191 (WLLAYLIVITASVIDWMLSIS) threads the bilayer. The Extracellular portion of the chain corresponds to 192-197 (MLCDEN). Residues 198–218 (LRVRRLIRPFFLLQNSSLMKK) traverse the membrane as a helical segment. An interaction with phosphatidylinositol 3,5-bisphosphate region spans residues 217–221 (KKTLK). Residues 219–232 (TLKCIKRTLPEIAS) are Cytoplasmic-facing. Residues 233–253 (VILLLALHICLFTMIGMLIFA) traverse the membrane as a helical segment. The Extracellular portion of the chain corresponds to 254–267 (KSDDPKQNGEWQTY). Positions 268 to 292 (FRNLPKALSSLLVLLTTANNPDVMI) form an intramembrane region, helical; Pore-forming. The Extracellular segment spans residues 293 to 302 (PAYSLNRGYS). Residues 303–323 (IFFILFSVFGTYLLMNLMTAI) form a helical membrane-spanning segment. Over 324–452 (IYNQFRGYLL…YVYSHYYISV (129 aa)) the chain is Cytoplasmic. A helical membrane pass occupies residues 453–475 (LGNAVALANVICICTVLVLNAEK). At 476 to 486 (SASEKNYFYME) the chain is on the extracellular side. The helical transmembrane segment at 487–507 (IINCIFILYYLIEMLLKIVAF) threads the bilayer. Residues 508 to 518 (GWKGYLSYRNN) lie on the Cytoplasmic side of the membrane. Residues 519 to 539 (IFDGFLTVLLLAIQIVIFITF) traverse the membrane as a helical segment. Residues 540 to 564 (KIPYVDVDPVPRHVMALWEMIRLVN) lie on the Extracellular side of the membrane. The helical transmembrane segment at 565–585 (MLIVFRFLRIIPEIKLMAVVA) threads the bilayer. The Cytoplasmic segment spans residues 586–596 (STIVDLVKNLR). A helical membrane pass occupies residues 597–617 (AFAGILLVVYYMFAVLGIWLF). Residues 618 to 658 (QGAISPPSNMSLVSNSSLENITGPYSMECGTFEQLEYWPNN) lie on the Extracellular side of the membrane. N-linked (GlcNAc...) asparagine glycans are attached at residues N626, N632, and N637. An intramembrane region (helical; Pore-forming) is located at residues 659–681 (FDDFASSLILLYNIMVVNNWHVF). Over 682–696 (TDAYARYTTDWSLVY) the chain is Extracellular. Residues 697–717 (FVVWWLTSSVMWVNLFVALIL) form a helical membrane-spanning segment. The Cytoplasmic segment spans residues 718 to 774 (ENFTYKWDRSNGLSVEDVERIAYQSTVQLMFKEHVKEPTEEELLAQLHQHPHLHLSW).

It belongs to the calcium channel alpha-1 subunit (TC 1.A.1.11) family. Two pore calcium channel subfamily. In terms of assembly, homodimer. In terms of processing, N-glycosylated.

Its subcellular location is the late endosome membrane. It is found in the lysosome membrane. It carries out the reaction Na(+)(in) = Na(+)(out). It catalyses the reaction Ca(2+)(in) = Ca(2+)(out). Its function is as follows. Intracellular channel initially characterized as a non-selective Ca(2+)-permeable channel activated by NAADP (nicotinic acid adenine dinucleotide phosphate), it is also a highly-selective Na(+) channel activated directly by PI(3,5)P2 (phosphatidylinositol 3,5-bisphosphate). Localizes to the lysosomal and late endosome membranes where it regulates organellar membrane excitability, membrane trafficking, and pH homeostasis. This chain is Two pore channel protein 2 (tpcn2), found in Danio rerio (Zebrafish).